The following is a 282-amino-acid chain: 4-diphosphocytidyl-2-C-methyl-D-erythritol kinase (282 aa).

Lys-9 is an active-site residue. 98–108 (PMGGGLGGGSS) lines the ATP pocket. Asp-140 is a catalytic residue.

Belongs to the GHMP kinase family. IspE subfamily. Homodimer.

It catalyses the reaction 4-CDP-2-C-methyl-D-erythritol + ATP = 4-CDP-2-C-methyl-D-erythritol 2-phosphate + ADP + H(+). Its pathway is isoprenoid biosynthesis; isopentenyl diphosphate biosynthesis via DXP pathway; isopentenyl diphosphate from 1-deoxy-D-xylulose 5-phosphate: step 3/6. Its function is as follows. Catalyzes the phosphorylation of the position 2 hydroxy group of 4-diphosphocytidyl-2C-methyl-D-erythritol. The protein is 4-diphosphocytidyl-2-C-methyl-D-erythritol kinase of Salmonella paratyphi A (strain ATCC 9150 / SARB42).